The following is a 99-amino-acid chain: Small ribosomal subunit protein uS14c (99 aa).

Belongs to the universal ribosomal protein uS14 family. In terms of assembly, part of the 30S ribosomal subunit.

It localises to the plastid. The protein resides in the chloroplast. In terms of biological role, binds 16S rRNA, required for the assembly of 30S particles. The protein is Small ribosomal subunit protein uS14c of Welwitschia mirabilis (Tree tumbo).